The following is a 97-amino-acid chain: Co-chaperonin GroES (97 aa).

It belongs to the GroES chaperonin family. As to quaternary structure, heptamer of 7 subunits arranged in a ring. Interacts with the chaperonin GroEL.

Its subcellular location is the cytoplasm. In terms of biological role, together with the chaperonin GroEL, plays an essential role in assisting protein folding. The GroEL-GroES system forms a nano-cage that allows encapsulation of the non-native substrate proteins and provides a physical environment optimized to promote and accelerate protein folding. GroES binds to the apical surface of the GroEL ring, thereby capping the opening of the GroEL channel. The polypeptide is Co-chaperonin GroES (Stutzerimonas stutzeri (strain A1501) (Pseudomonas stutzeri)).